The following is a 155-amino-acid chain: MMPNTDVSSLSMLGQQTETAKSPEEAVLEKVPSNHAGTDYVVRFTAPEFTSLCPMTGQPDFAHIVIDYIPSEWLVESKSLKLFLHSFRNHGAFHEDCSIYIAKRIVELLDPKWLRIGAYWYPRGGIPIDVFWQTGKPPEGVWLPEQGVATYRGRG.

Residues 1-20 (MMPNTDVSSLSMLGQQTETA) show a composition bias toward polar residues. A disordered region spans residues 1 to 26 (MMPNTDVSSLSMLGQQTETAKSPEEA). Cys-53 serves as the catalytic Thioimide intermediate. Asp-60 serves as the catalytic Proton donor. Residues 75-77 (VES) and 94-95 (HE) each bind substrate.

It belongs to the GTP cyclohydrolase I family. QueF type 1 subfamily.

The protein resides in the cytoplasm. It carries out the reaction 7-aminomethyl-7-carbaguanine + 2 NADP(+) = 7-cyano-7-deazaguanine + 2 NADPH + 3 H(+). It participates in tRNA modification; tRNA-queuosine biosynthesis. Functionally, catalyzes the NADPH-dependent reduction of 7-cyano-7-deazaguanine (preQ0) to 7-aminomethyl-7-deazaguanine (preQ1). The polypeptide is NADPH-dependent 7-cyano-7-deazaguanine reductase (Rhizobium etli (strain CIAT 652)).